Consider the following 621-residue polypeptide: Type 2 DNA topoisomerase 6 subunit B (621 aa).

ATP is bound by residues Asn-48, Asp-80, 101–102 (SR), 111–118 (GQQGIGIS), and Lys-435.

It belongs to the TOP6B family. As to quaternary structure, homodimer. Heterotetramer of two Top6A and two Top6B chains.

It catalyses the reaction ATP-dependent breakage, passage and rejoining of double-stranded DNA.. In terms of biological role, relaxes both positive and negative superturns and exhibits a strong decatenase activity. The sequence is that of Type 2 DNA topoisomerase 6 subunit B from Methanosarcina acetivorans (strain ATCC 35395 / DSM 2834 / JCM 12185 / C2A).